The primary structure comprises 335 residues: Anthranilate phosphoribosyltransferase (335 aa).

5-phospho-alpha-D-ribose 1-diphosphate is bound by residues Gly-79, 82-83 (GD), Thr-87, 89-92 (NVST), 107-115 (KHGSRSVSS), and Ser-119. Gly-79 contributes to the anthranilate binding site. Ser-91 is a Mg(2+) binding site. Residue Arg-165 participates in anthranilate binding. The Mg(2+) site is built by Asp-223 and Glu-224.

It belongs to the anthranilate phosphoribosyltransferase family. In terms of assembly, homodimer. Mg(2+) is required as a cofactor.

The catalysed reaction is N-(5-phospho-beta-D-ribosyl)anthranilate + diphosphate = 5-phospho-alpha-D-ribose 1-diphosphate + anthranilate. The protein operates within amino-acid biosynthesis; L-tryptophan biosynthesis; L-tryptophan from chorismate: step 2/5. Functionally, catalyzes the transfer of the phosphoribosyl group of 5-phosphorylribose-1-pyrophosphate (PRPP) to anthranilate to yield N-(5'-phosphoribosyl)-anthranilate (PRA). This is Anthranilate phosphoribosyltransferase from Helicobacter pylori (strain HPAG1).